The primary structure comprises 71 residues: Pseudonajatoxin b (71 aa).

5 disulfides stabilise this stretch: cysteine 3–cysteine 21, cysteine 14–cysteine 42, cysteine 27–cysteine 31, cysteine 46–cysteine 58, and cysteine 59–cysteine 64.

It belongs to the three-finger toxin family. Long-chain subfamily. Type II alpha-neurotoxin sub-subfamily. As to expression, expressed by the venom gland.

The protein localises to the secreted. Functionally, binds with high affinity to muscular (alpha-1/CHRNA1) and neuronal (alpha-7/CHRNA7) nicotinic acetylcholine receptor (nAChR) and inhibits acetylcholine from binding to the receptor, thereby impairing neuromuscular and neuronal transmission. The polypeptide is Pseudonajatoxin b (Pseudonaja textilis (Eastern brown snake)).